The chain runs to 415 residues: 8-amino-7-oxononanoate synthase (415 aa).

Position 21 (R21) interacts with substrate. Position 117-118 (117-118 (GY)) interacts with pyridoxal 5'-phosphate. H149 provides a ligand contact to substrate. Residues S195, H223, and T251 each contribute to the pyridoxal 5'-phosphate site. K254 carries the post-translational modification N6-(pyridoxal phosphate)lysine. T374 lines the substrate pocket.

Belongs to the class-II pyridoxal-phosphate-dependent aminotransferase family. BioF subfamily. Homodimer. Pyridoxal 5'-phosphate is required as a cofactor.

The enzyme catalyses 6-carboxyhexanoyl-[ACP] + L-alanine + H(+) = (8S)-8-amino-7-oxononanoate + holo-[ACP] + CO2. It participates in cofactor biosynthesis; biotin biosynthesis. Its function is as follows. Catalyzes the decarboxylative condensation of pimeloyl-[acyl-carrier protein] and L-alanine to produce 8-amino-7-oxononanoate (AON), [acyl-carrier protein], and carbon dioxide. The polypeptide is 8-amino-7-oxononanoate synthase (Ralstonia pickettii (strain 12J)).